The primary structure comprises 591 residues: L-fucose isomerase (591 aa).

Active-site proton acceptor residues include E337 and D361. E337, D361, and H528 together coordinate Mn(2+).

The protein belongs to the L-fucose isomerase family. In terms of assembly, homohexamer. It depends on Mn(2+) as a cofactor.

The protein localises to the cytoplasm. The enzyme catalyses L-fucose = L-fuculose. It participates in carbohydrate degradation; L-fucose degradation; L-lactaldehyde and glycerone phosphate from L-fucose: step 1/3. Its function is as follows. Converts the aldose L-fucose into the corresponding ketose L-fuculose. In Escherichia coli (strain 55989 / EAEC), this protein is L-fucose isomerase.